A 145-amino-acid polypeptide reads, in one-letter code: Large ribosomal subunit protein uL15 (145 aa).

2 stretches are compositionally biased toward basic residues: residues 1–13 (MIRK…KQRG) and 22–33 (TKKRRGAGHRGG). The tract at residues 1 to 41 (MIRKTKKIRKQRGSRSVGGGCTKKRRGAGHRGGRGQAGGNK) is disordered.

This sequence belongs to the universal ribosomal protein uL15 family. In terms of assembly, part of the 50S ribosomal subunit.

Binds to the 23S rRNA. This chain is Large ribosomal subunit protein uL15, found in Methanosphaera stadtmanae (strain ATCC 43021 / DSM 3091 / JCM 11832 / MCB-3).